We begin with the raw amino-acid sequence, 759 residues long: Olfactomedin-like protein 2B (759 aa).

Positions 1–20 (MAKSLLLVLCFALVTTLGWG) are cleaved as a signal peptide. 2 coiled-coil regions span residues 40–68 (TEDE…KVKA) and 179–209 (KLEE…MNKR). N-linked (GlcNAc...) asparagine glycosylation is found at Asn187 and Asn213. Disordered stretches follow at residues 346-396 (TRRP…VSAS) and 456-494 (THTA…EEED). A compositionally biased stretch (low complexity) spans 356-396 (AAVTADAGTTSAGTPTTALPSARLPASTAAPSTPDPAVSAS). Residues 502-759 (RCKDTLSTIT…QVTYHVIFAY (258 aa)) enclose the Olfactomedin-like domain. Cys503 and Cys689 are joined by a disulfide. A glycan (N-linked (GlcNAc...) asparagine) is linked at Asn704.

Homodimer. Binds to heparin and chondroitin sulfate E. O-glycosylated and N-glycosylated.

The protein localises to the secreted. This is Olfactomedin-like protein 2B (OLFML2B) from Bos taurus (Bovine).